A 417-amino-acid chain; its full sequence is Transmembrane protease serine 11G (417 aa).

Over 1-22 the chain is Cytoplasmic; that stretch reads MYQPGILGRRKRVCKPWTVALT. Residues 23 to 43 traverse the membrane as a helical; Signal-anchor for type II membrane protein segment; it reads TTAALLALAVLIGLLVYFLVY. Residues 44-417 are Extracellular-facing; sequence EEKTHYYQAS…RNWIKSKTNI (374 aa). The SEA domain maps to 46 to 165; the sequence is KTHYYQASFW…PYLREMNAAQ (120 aa). The Peptidase S1 domain occupies 186-416; the sequence is IADGKPAGSN…YRNWIKSKTN (231 aa). Residues Cys-211 and Cys-227 are joined by a disulfide bond. Active-site charge relay system residues include His-226 and Asp-271. 2 cysteine pairs are disulfide-bonded: Cys-336–Cys-352 and Cys-363–Cys-392. Ser-367 (charge relay system) is an active-site residue.

It belongs to the peptidase S1 family. In terms of tissue distribution, highest expression in lung and tongue. Also expressed in brain, colon, heart and liver. Isoform 1 is the predominant form in tongue whereas both isoforms are expressed in similar amounts in lung. At the cellular level, expression is confined to epithelial cells within the cleft of the circumvallate papillae extending into the ducts of the minor salivary glands, the respiratory epithelium of the nasal cavity and tear gland ducts.

The protein resides in the membrane. This Rattus norvegicus (Rat) protein is Transmembrane protease serine 11G (Tmprss11g).